A 155-amino-acid polypeptide reads, in one-letter code: Photosystem II extrinsic protein V (155 aa).

The N-terminal stretch at 1–20 (MFVKMIGWLVLFLFAHQTWA) is a signal peptide. Positions 50, 53, 54, and 105 each coordinate heme c.

Belongs to the cytochrome c family. PsbV subfamily. PSII is composed of 1 copy each of membrane proteins PsbA, PsbB, PsbC, PsbD, PsbE, PsbF, PsbH, PsbI, PsbJ, PsbK, PsbL, PsbM, PsbT, PsbY, PsbZ, Psb30/Ycf12, at least 3 peripheral proteins of the oxygen-evolving complex and a large number of cofactors. It forms dimeric complexes. The extrinsic subunits in red algae are PsbO (OEC33), PsbQ', cytochrome c-550 and PsbU. Requires heme c as cofactor.

The protein localises to the plastid. The protein resides in the chloroplast thylakoid membrane. In terms of biological role, one of the extrinsic, lumenal subunits of photosystem II (PSII). PSII is a light-driven water plastoquinone oxidoreductase, using light energy to abstract electrons from H(2)O, generating a proton gradient subsequently used for ATP formation. The extrinsic proteins stabilize the structure of photosystem II oxygen-evolving complex (OEC), the ion environment of oxygen evolution and protect the OEC against heat-induced inactivation. Unlike the T.vulcanus ortholog, it does not bind by itself to PSII, but requires all extrinsic members of the OEC. The protein is Photosystem II extrinsic protein V of Cyanidium caldarium (Red alga).